Here is a 78-residue protein sequence, read N- to C-terminus: Conotoxin ba1890.8 (78 aa).

The signal sequence occupies residues 1–22; sequence MKTSGRLLFLCLAVGLLLESQA. Positions 23–61 are excised as a propeptide; the sequence is HPIADAEDATRNVGSDGTSVELSEILERGQDSSAEKGQR. The disordered stretch occupies residues 25–78; that stretch reads IADAEDATRNVGSDGTSVELSEILERGQDSSAEKGQRQNDHDVDESGHDIPFPS. Residues 34-43 are compositionally biased toward polar residues; sequence NVGSDGTSVE. Residues 47–72 show a composition bias toward basic and acidic residues; that stretch reads ILERGQDSSAEKGQRQNDHDVDESGH. Q62 is modified (pyrrolidone carboxylic acid).

Belongs to the conotoxin H superfamily. In terms of tissue distribution, expressed by the venom duct.

The protein localises to the secreted. In terms of biological role, probable toxin. This chain is Conotoxin ba1890.8, found in Conus bayani (Bayan's cone).